The primary structure comprises 285 residues: Complex I assembly factor TIMMDC1, mitochondrial (285 aa).

4 helical membrane-spanning segments follow: residues 80–100 (AAVS…FIYA), 137–159 (RWSW…LTVY), 165–185 (MSHF…NLGV), and 188–208 (LVAG…LLMA). Positions 265–285 (RIEELLSLPRNPSSPHQQSKH) are disordered. The segment covering 274-285 (RNPSSPHQQSKH) has biased composition (polar residues). Residue Ser277 is modified to Phosphoserine.

It belongs to the Tim17/Tim22/Tim23 family. In terms of assembly, associates with the intermediate 315 kDa subcomplex of incompletely assembled complex I. Interacts with TMEM70.

The protein resides in the mitochondrion membrane. Its function is as follows. Chaperone protein involved in the assembly of the mitochondrial NADH:ubiquinone oxidoreductase complex (complex I). Participates in constructing the membrane arm of complex I. This chain is Complex I assembly factor TIMMDC1, mitochondrial, found in Mus musculus (Mouse).